Reading from the N-terminus, the 283-residue chain is Phosphatidylserine decarboxylase proenzyme (283 aa).

Catalysis depends on charge relay system; for autoendoproteolytic cleavage activity residues Asp-88, His-145, and Ser-248. The active-site Schiff-base intermediate with substrate; via pyruvic acid; for decarboxylase activity is the Ser-248. Ser-248 carries the pyruvic acid (Ser); by autocatalysis modification.

It belongs to the phosphatidylserine decarboxylase family. PSD-B subfamily. Prokaryotic type I sub-subfamily. In terms of assembly, heterodimer of a large membrane-associated beta subunit and a small pyruvoyl-containing alpha subunit. The cofactor is pyruvate. Post-translationally, is synthesized initially as an inactive proenzyme. Formation of the active enzyme involves a self-maturation process in which the active site pyruvoyl group is generated from an internal serine residue via an autocatalytic post-translational modification. Two non-identical subunits are generated from the proenzyme in this reaction, and the pyruvate is formed at the N-terminus of the alpha chain, which is derived from the carboxyl end of the proenzyme. The autoendoproteolytic cleavage occurs by a canonical serine protease mechanism, in which the side chain hydroxyl group of the serine supplies its oxygen atom to form the C-terminus of the beta chain, while the remainder of the serine residue undergoes an oxidative deamination to produce ammonia and the pyruvoyl prosthetic group on the alpha chain. During this reaction, the Ser that is part of the protease active site of the proenzyme becomes the pyruvoyl prosthetic group, which constitutes an essential element of the active site of the mature decarboxylase.

Its subcellular location is the cell membrane. It catalyses the reaction a 1,2-diacyl-sn-glycero-3-phospho-L-serine + H(+) = a 1,2-diacyl-sn-glycero-3-phosphoethanolamine + CO2. Its pathway is phospholipid metabolism; phosphatidylethanolamine biosynthesis; phosphatidylethanolamine from CDP-diacylglycerol: step 2/2. In terms of biological role, catalyzes the formation of phosphatidylethanolamine (PtdEtn) from phosphatidylserine (PtdSer). The sequence is that of Phosphatidylserine decarboxylase proenzyme from Variovorax paradoxus (strain S110).